A 1036-amino-acid chain; its full sequence is MEVVGDFEYSKRDLVGHGAFAVVFRGRHRQKTDWEVAIKSINKKNLSKSQILLGKEIKILKELQHENIVALYDVQELPNSVFLVMEYCNGGDLADYLQAKGTLSEDTIRVFLHQIAAAMRILHSKGIIHRDLKPQNILLSYANRRKSSVSGIRIKIADFGFARYLHSNMMAATLCGSPMYMAPEVIMSQHYDAKADLWSIGTVIYQCLVGKPPFQANSPQDLRMFYEKNRSLMPSIPRETSPYLANLLLGLLQRNQKDRMDFEAFFSHPFLEQGPVKKSCPVPVPMYSGSVSGSSCGSSPSCRFASPPSLPDMQHIQEENLSSPPLGPPNYLQVSKDSASTSSKNSSCDTDDFVLVPHNISSDHSCDMPVGTAGRRASNEFLVCGGQCQPTVSPHSETAPIPVPTQIRNYQRIEQNLTSTASSGTNVHGSPRSAVVRRSNTSPMGFLRPGSCSPVPADTAQTVGRRLSTGSSRPYSPSPLVGTIPEQFSQCCCGHPQGHDSRSRNSSGSPVPQAQSPQSLLSGARLQSAPTLTDIYQNKQKLRKQHSDPVCPSHTGAGYSYSPQPSRPGSLGTSPTKHLGSSPRSSDWFFKTPLPTIIGSPTKTTAPFKIPKTQASSNLLALVTRHGPAEEQSKDGNEPRECAHCLLVQGSERQRAEQQSKAVFGRSVSTGKLSDQQGKTPICRHQGSTDSLNTERPMDIAPAGACGGVLAPPAGTAASSKAVLFTVGSPPHSAAAPTCTHMFLRTRTTSVGPSNSGGSLCAMSGRVCVGSPPGPGFGSSPPGAEAAPSLRYVPYGASPPSLEGLITFEAPELPEETLMEREHTDTLRHLNVMLMFTECVLDLTAMRGGNPELCTSAVSLYQIQESVVVDQISQLSKDWGRVEQLVLYMKAAQLLAASLHLAKAQIKSGKLSPSTAVKQVVKNLNERYKFCITMCKKLTEKLNRFFSDKQRFIDEINSVTAEKLIYNCAVEMVQSAALDEMFQQTEDIVYRYHKAALLLEGLSRILQDPADIENVHKYKCSIERRLSALCHSTATV.

The region spanning 9–271 (YSKRDLVGHG…FEAFFSHPFL (263 aa)) is the Protein kinase domain. Residues 15-23 (VGHGAFAVV) and Lys-39 each bind ATP. Asp-131 serves as the catalytic Proton acceptor. Disordered stretches follow at residues 319 to 348 (ENLS…NSSC), 418 to 460 (TSTA…ADTA), 491 to 522 (CCCG…SLLS), 540 to 588 (QKLR…SSDW), and 656 to 695 (AEQQ…LNTE). Over residues 335-348 (SKDSASTSSKNSSC) the composition is skewed to low complexity. Residues 418–428 (TSTASSGTNVH) show a composition bias toward polar residues. Phosphoserine is present on Ser-430. A compositionally biased stretch (polar residues) spans 504–521 (RNSSGSPVPQAQSPQSLL). Over residues 659-679 (QSKAVFGRSVSTGKLSDQQGK) the composition is skewed to polar residues. Ser-771 and Ser-780 each carry phosphoserine. Residues 812 to 1036 (ELPEETLMER…SALCHSTATV (225 aa)) are CTD-like region.

This sequence belongs to the protein kinase superfamily. Ser/Thr protein kinase family. APG1/unc-51/ULK1 subfamily. Interacts with SYNGAP1. Component of a complex consisting of ATG13/KIAA0652, ULK1 and RB1CC1/FIP200. Interacts (via C-terminus) with ATG13/KIAA0652. Associates with the mammalian target of rapamycin complex 1 (mTORC1) through an interaction with RPTOR. Post-translationally, autophosphorylated. In response to nutrient limitation, probably phosphorylated and activated by AMPK, leading to activate autophagy.

It is found in the cytoplasmic vesicle membrane. The enzyme catalyses L-seryl-[protein] + ATP = O-phospho-L-seryl-[protein] + ADP + H(+). It carries out the reaction L-threonyl-[protein] + ATP = O-phospho-L-threonyl-[protein] + ADP + H(+). Functionally, serine/threonine-protein kinase involved in autophagy in response to starvation. Acts upstream of phosphatidylinositol 3-kinase PIK3C3 to regulate the formation of autophagophores, the precursors of autophagosomes. Part of regulatory feedback loops in autophagy: acts both as a downstream effector and a negative regulator of mammalian target of rapamycin complex 1 (mTORC1) via interaction with RPTOR. Activated via phosphorylation by AMPK, also acts as a negative regulator of AMPK through phosphorylation of the AMPK subunits PRKAA1, PRKAB2 and PRKAG1. May phosphorylate ATG13/KIAA0652, FRS2, FRS3 and RPTOR; however such data need additional evidences. Not involved in ammonia-induced autophagy or in autophagic response of cerebellar granule neurons (CGN) to low potassium concentration. Plays a role early in neuronal differentiation and is required for granule cell axon formation: may govern axon formation via Ras-like GTPase signaling and through regulation of the Rab5-mediated endocytic pathways within developing axons. The chain is Serine/threonine-protein kinase ULK2 (ULK2) from Homo sapiens (Human).